The primary structure comprises 188 residues: Elongation factor P (188 aa).

The protein belongs to the elongation factor P family.

The protein localises to the cytoplasm. It functions in the pathway protein biosynthesis; polypeptide chain elongation. In terms of biological role, involved in peptide bond synthesis. Stimulates efficient translation and peptide-bond synthesis on native or reconstituted 70S ribosomes in vitro. Probably functions indirectly by altering the affinity of the ribosome for aminoacyl-tRNA, thus increasing their reactivity as acceptors for peptidyl transferase. In Exiguobacterium sibiricum (strain DSM 17290 / CCUG 55495 / CIP 109462 / JCM 13490 / 255-15), this protein is Elongation factor P.